A 194-amino-acid chain; its full sequence is Cysteine and glycine-rich protein 3 (194 aa).

The interval Met1–Gly5 is interaction with TCAP. The 52-residue stretch at Cys10 to Cys61 folds into the LIM zinc-binding 1 domain. The short motif at Arg64 to Lys69 is the Nuclear localization signal element. Residues Gln94–Ser105 form an interaction with CLF2 and isoform 2 region. Phosphoserine is present on residues Ser95 and Ser153. The 52-residue stretch at Cys120–Cys171 folds into the LIM zinc-binding 2 domain.

Self-associates. Oligomeric in the cytoplasm and monomeric in the nucleus. Homooligomers preferentially form along the actin cytoskeleton. Isoform 2 interacts with isoform 1. Isoform 1 but not isoform 2 interacts with MYOD1 and MYOG. Isoform 1 interacts with TCAP, ACTN2 and NRAP. Isoform 2 interacts with TCAP and alpha-actinin. Interacts with LDHD. Interacts (via N-terminus)with GLRX3 (via C-terminus) and PPP3CA; GLRX3 and calcineurin compete for interaction with CSRP3. Interacts with MYF6. Interacts with CFL2; the stoichiometry influences F-actin depolymerization and possibly two molecules of CFL2 can interact with one molecule of CSRP3 resulting in the highest functional impact; the interaction is stronger with phosphorylated CFL2. Post-translationally, phosphorylated by PKC/PRKCA. Cardiac and slow-twitch skeletal muscles. Isoform 2 is expressed in striated muscle. Isoform 2 is specifically expressed at higher levels in patients with neuromuscular diseases, such as limb-girdle muscular dystrophy 2A (LGMD2A), Duchenne muscular dystrophy (DMD) and dermatomyositis.

The protein resides in the nucleus. It localises to the cytoplasm. The protein localises to the cytoskeleton. It is found in the myofibril. Its subcellular location is the sarcomere. The protein resides in the z line. Functionally, positive regulator of myogenesis. Acts as a cofactor for myogenic bHLH transcription factors such as MYOD1, and probably MYOG and MYF6. Enhances the DNA-binding activity of the MYOD1:TCF3 isoform E47 complex and may promote formation of a functional MYOD1:TCF3 isoform E47:MEF2A complex involved in myogenesis. Plays a crucial and specific role in the organization of cytosolic structures in cardiomyocytes. Could play a role in mechanical stretch sensing. May be a scaffold protein that promotes the assembly of interacting proteins at Z-line structures. It is essential for calcineurin anchorage to the Z line. Required for stress-induced calcineurin-NFAT activation. The role in regulation of cytoskeleton dynamics by association with CFL2 is reported conflictingly: Shown to enhance CFL2-mediated F-actin depolymerization dependent on the CSRP3:CFL2 molecular ratio, and also shown to reduce the ability of CLF1 and CFL2 to enhance actin depolymerization. Proposed to contribute to the maintenance of muscle cell integrity through an actin-based mechanism. Can directly bind to actin filaments, cross-link actin filaments into bundles without polarity selectivity and protect them from dilution- and cofilin-mediated depolymerization; the function seems to involve its self-association. In vitro can inhibit PKC/PRKCA activity. Proposed to be involved in cardiac stress signaling by down-regulating excessive PKC/PRKCA signaling. In terms of biological role, may play a role in early sarcomere organization. Overexpression in myotubes negatively regulates myotube differentiation. By association with isoform 1 and thus changing the CSRP3 isoform 1:CFL2 stoichiometry is proposed to down-regulate CFL2-mediated F-actin depolymerization. This Homo sapiens (Human) protein is Cysteine and glycine-rich protein 3 (CSRP3).